The chain runs to 293 residues: Beta-porphyranase B (293 aa).

Positions Met-1–Ala-21 are cleaved as a signal peptide. The 254-residue stretch at Gln-38–Ser-291 folds into the GH16 domain. The substrate site is built by Trp-67, Arg-70, Glu-156, Glu-161, and Glu-256. The Nucleophile role is filled by Glu-156. The active-site Proton donor is Glu-161.

It belongs to the glycosyl hydrolase 16 family.

The protein resides in the periplasm. The enzyme catalyses Hydrolysis of beta-D-galactopyranose-(1-&gt;4)-alpha-L-galactopyranose-6-sulfate linkages in porphyran.. Functionally, cleaves the sulfated polysaccharide porphyran at the (1-&gt;4) linkages between beta-D-galactopyranose and alpha-L-galactopyranose-6-sulfate, forming mostly the disaccharide alpha-L-galactopyranose-6-sulfate-(1-&gt;3)-beta-D-galactose. Some longer oligosaccharides of even number of residues are also observed. Inactive on the non-sulfated agarose portion of the porphyran backbone. In contrast to PorA, tolerates the presence of 3-6-anhydro-L-galactose in subsite -2. This is Beta-porphyranase B (porB) from Zobellia galactanivorans (strain DSM 12802 / CCUG 47099 / CIP 106680 / NCIMB 13871 / Dsij).